The chain runs to 717 residues: Polyribonucleotide nucleotidyltransferase (717 aa).

Asp496 and Asp502 together coordinate Mg(2+). The KH domain maps to 563-622 (PRLLSFKIDPEMIGLVIGPGGKTIKGITEETGVKIDIDDDGTVTIAAADGEKAKQACNII). Residues 632 to 700 (GDVYVGRVTR…SKGRVNLTRL (69 aa)) form the S1 motif domain.

This sequence belongs to the polyribonucleotide nucleotidyltransferase family. It depends on Mg(2+) as a cofactor.

It is found in the cytoplasm. It catalyses the reaction RNA(n+1) + phosphate = RNA(n) + a ribonucleoside 5'-diphosphate. Its function is as follows. Involved in mRNA degradation. Catalyzes the phosphorolysis of single-stranded polyribonucleotides processively in the 3'- to 5'-direction. In Trichodesmium erythraeum (strain IMS101), this protein is Polyribonucleotide nucleotidyltransferase.